The chain runs to 493 residues: Cytoplasmic tRNA 2-thiolation protein 2 (493 aa).

A Phosphoserine modification is found at Ser489.

Belongs to the CTU2/NCS2 family. As to quaternary structure, interacts with NCS6 and URM1. May act by forming a heterodimer with NCS6.

Its subcellular location is the cytoplasm. It functions in the pathway tRNA modification; 5-methoxycarbonylmethyl-2-thiouridine-tRNA biosynthesis. Plays a central role in 2-thiolation of mcm(5)S(2)U at tRNA wobble positions of tRNA(Lys), tRNA(Glu) and tRNA(Gln). May act by forming a heterodimer with NCS6 that ligates sulfur from thiocarboxylated URM1 onto the uridine of tRNAs at wobble position. Prior mcm(5) tRNA modification by the elongator complex is required for 2-thiolation. May also be involved in protein urmylation. The sequence is that of Cytoplasmic tRNA 2-thiolation protein 2 from Saccharomyces cerevisiae (strain AWRI1631) (Baker's yeast).